Consider the following 163-residue polypeptide: Large ribosomal subunit protein uL10 (163 aa).

The protein belongs to the universal ribosomal protein uL10 family. In terms of assembly, part of the ribosomal stalk of the 50S ribosomal subunit. The N-terminus interacts with L11 and the large rRNA to form the base of the stalk. The C-terminus forms an elongated spine to which L12 dimers bind in a sequential fashion forming a multimeric L10(L12)X complex.

Functionally, forms part of the ribosomal stalk, playing a central role in the interaction of the ribosome with GTP-bound translation factors. The polypeptide is Large ribosomal subunit protein uL10 (Actinobacillus succinogenes (strain ATCC 55618 / DSM 22257 / CCUG 43843 / 130Z)).